We begin with the raw amino-acid sequence, 501 residues long: Armadillo repeat-containing protein 6 (501 aa).

A Phosphoserine modification is found at Ser-64. ARM repeat units follow at residues Gly-220–Asn-264, Lys-274–Gly-318, Leu-319–Gly-369, and Thr-370–Gly-412. Position 263 is a pros-methylhistidine (His-263).

The protein belongs to the ARMC6 family. Post-translationally, methylated at His-263 by METTL9.

In Pongo abelii (Sumatran orangutan), this protein is Armadillo repeat-containing protein 6 (ARMC6).